We begin with the raw amino-acid sequence, 115 residues long: uncharacterized protein (115 aa).

Over 1 to 11 (MKLTKEKKNDC) the chain is Cytoplasmic. A helical membrane pass occupies residues 12–32 (LVGVSYIPPLNFFTLTFLFLL). Residues 33 to 52 (RIEKVHLSLSLSLSLSLRFY) are Extracellular-facing. Residues 53 to 73 (YFHNVCYPSLFLFFCFVIPFF) form a helical membrane-spanning segment. Residues 74 to 78 (YSVRF) are Cytoplasmic-facing. Residues 79 to 98 (ILLYLHILRSFYELNILLLY) form a helical membrane-spanning segment. Residues 99–115 (GAENSRRQSPPGYYVIR) lie on the Extracellular side of the membrane.

The protein localises to the membrane. This is an uncharacterized protein from Saccharomyces cerevisiae (strain ATCC 204508 / S288c) (Baker's yeast).